Consider the following 426-residue polypeptide: 3-phosphoshikimate 1-carboxyvinyltransferase (426 aa).

3-phosphoshikimate-binding residues include lysine 22, serine 23, and arginine 27. Position 22 (lysine 22) interacts with phosphoenolpyruvate. Glycine 96 and arginine 124 together coordinate phosphoenolpyruvate. Residues serine 170, serine 171, glutamine 172, serine 198, aspartate 314, asparagine 337, and lysine 341 each contribute to the 3-phosphoshikimate site. Glutamine 172 is a phosphoenolpyruvate binding site. Aspartate 314 serves as the catalytic Proton acceptor. Residues arginine 345, arginine 387, and lysine 412 each coordinate phosphoenolpyruvate.

The protein belongs to the EPSP synthase family. As to quaternary structure, monomer.

Its subcellular location is the cytoplasm. It carries out the reaction 3-phosphoshikimate + phosphoenolpyruvate = 5-O-(1-carboxyvinyl)-3-phosphoshikimate + phosphate. It participates in metabolic intermediate biosynthesis; chorismate biosynthesis; chorismate from D-erythrose 4-phosphate and phosphoenolpyruvate: step 6/7. Functionally, catalyzes the transfer of the enolpyruvyl moiety of phosphoenolpyruvate (PEP) to the 5-hydroxyl of shikimate-3-phosphate (S3P) to produce enolpyruvyl shikimate-3-phosphate and inorganic phosphate. The chain is 3-phosphoshikimate 1-carboxyvinyltransferase from Shewanella sp. (strain ANA-3).